Consider the following 273-residue polypeptide: Flagellin FljK (273 aa).

The protein belongs to the bacterial flagellin family. As to quaternary structure, in C.crescentus, the flagellar filament is composed of multiple flagellins of 29 kDa; 27 kDa and 25 kDa.

The protein resides in the secreted. It is found in the bacterial flagellum. Flagellin is the subunit protein which polymerizes to form the filaments of bacterial flagella. The sequence is that of Flagellin FljK (fljK) from Caulobacter vibrioides (strain ATCC 19089 / CIP 103742 / CB 15) (Caulobacter crescentus).